The sequence spans 653 residues: Exocyst complex component 7 (653 aa).

The SEC8 and ARHQ binding stretch occupies residues Met-1 to Thr-384. 2 coiled-coil regions span residues Gln-5–Met-42 and Val-63–Asp-85. At Ser-133 the chain carries Phosphoserine. Residues Phe-238–Asp-272 are disordered.

It belongs to the EXO70 family. The exocyst complex is composed of EXOC1, EXOC2, EXOC3, EXOC4, EXOC5, EXOC6, EXOC7 and EXOC8. Interacts with ARHQ in a GTP-dependent manner. Interacts with RAB11FIP3.

It is found in the cytoplasm. The protein localises to the cytosol. It localises to the cell membrane. Its subcellular location is the midbody. The protein resides in the midbody ring. Component of the exocyst complex involved in the docking of exocytic vesicles with fusion sites on the plasma membrane. In adipocytes, plays a crucial role in targeting SLC2A4 vesicle to the plasma membrane in response to insulin, perhaps directing the vesicle to the precise site of fusion. It is required for neuron survival and plays an essential role in cortical development. This is Exocyst complex component 7 (Exoc7) from Rattus norvegicus (Rat).